The sequence spans 373 residues: tRNA-specific 2-thiouridylase MnmA (373 aa).

ATP is bound by residues 12-19 (GMSGGVDS) and Met38. Residues 98-100 (NPD) are interaction with target base in tRNA. Cys103 acts as the Nucleophile in catalysis. A disulfide bridge connects residues Cys103 and Cys200. Residue Gly127 coordinates ATP. The interaction with tRNA stretch occupies residues 150–152 (KDQ). Cys200 functions as the Cysteine persulfide intermediate in the catalytic mechanism. The interaction with tRNA stretch occupies residues 312-313 (RY).

Belongs to the MnmA/TRMU family.

Its subcellular location is the cytoplasm. The enzyme catalyses S-sulfanyl-L-cysteinyl-[protein] + uridine(34) in tRNA + AH2 + ATP = 2-thiouridine(34) in tRNA + L-cysteinyl-[protein] + A + AMP + diphosphate + H(+). Its function is as follows. Catalyzes the 2-thiolation of uridine at the wobble position (U34) of tRNA, leading to the formation of s(2)U34. The sequence is that of tRNA-specific 2-thiouridylase MnmA from Streptococcus pyogenes serotype M12 (strain MGAS2096).